Consider the following 120-residue polypeptide: Chaperonin GroEL (120 aa).

23-27 serves as a coordination point for ATP; it reads DGTTT.

Belongs to the chaperonin (HSP60) family. As to quaternary structure, forms a cylinder of 14 subunits composed of two heptameric rings stacked back-to-back. Interacts with the co-chaperonin GroES.

The protein resides in the cytoplasm. It catalyses the reaction ATP + H2O + a folded polypeptide = ADP + phosphate + an unfolded polypeptide.. Its function is as follows. Together with its co-chaperonin GroES, plays an essential role in assisting protein folding. The GroEL-GroES system forms a nano-cage that allows encapsulation of the non-native substrate proteins and provides a physical environment optimized to promote and accelerate protein folding. The polypeptide is Chaperonin GroEL (Mycolicibacterium fallax (Mycobacterium fallax)).